A 479-amino-acid chain; its full sequence is Glutamyl-tRNA(Gln) amidotransferase subunit A (479 aa).

Catalysis depends on charge relay system residues Lys74 and Ser149. The Acyl-ester intermediate role is filled by Ser173.

The protein belongs to the amidase family. GatA subfamily. In terms of assembly, heterotrimer of A, B and C subunits.

It catalyses the reaction L-glutamyl-tRNA(Gln) + L-glutamine + ATP + H2O = L-glutaminyl-tRNA(Gln) + L-glutamate + ADP + phosphate + H(+). Functionally, allows the formation of correctly charged Gln-tRNA(Gln) through the transamidation of misacylated Glu-tRNA(Gln) in organisms which lack glutaminyl-tRNA synthetase. The reaction takes place in the presence of glutamine and ATP through an activated gamma-phospho-Glu-tRNA(Gln). In Cenarchaeum symbiosum (strain A), this protein is Glutamyl-tRNA(Gln) amidotransferase subunit A.